The chain runs to 293 residues: 4-hydroxy-tetrahydrodipicolinate synthase (293 aa).

Serine 45 lines the pyruvate pocket. Tyrosine 133 (proton donor/acceptor) is an active-site residue. The Schiff-base intermediate with substrate role is filled by lysine 161. Residue isoleucine 203 participates in pyruvate binding.

It belongs to the DapA family. As to quaternary structure, homotetramer; dimer of dimers.

The protein localises to the cytoplasm. It catalyses the reaction L-aspartate 4-semialdehyde + pyruvate = (2S,4S)-4-hydroxy-2,3,4,5-tetrahydrodipicolinate + H2O + H(+). It participates in amino-acid biosynthesis; L-lysine biosynthesis via DAP pathway; (S)-tetrahydrodipicolinate from L-aspartate: step 3/4. Functionally, catalyzes the condensation of (S)-aspartate-beta-semialdehyde [(S)-ASA] and pyruvate to 4-hydroxy-tetrahydrodipicolinate (HTPA). The sequence is that of 4-hydroxy-tetrahydrodipicolinate synthase from Psychromonas ingrahamii (strain DSM 17664 / CCUG 51855 / 37).